Consider the following 63-residue polypeptide: Large ribosomal subunit protein uL29 (63 aa).

This sequence belongs to the universal ribosomal protein uL29 family.

This chain is Large ribosomal subunit protein uL29, found in Erwinia tasmaniensis (strain DSM 17950 / CFBP 7177 / CIP 109463 / NCPPB 4357 / Et1/99).